A 209-amino-acid chain; its full sequence is NADH-quinone oxidoreductase subunit C (209 aa).

It belongs to the complex I 30 kDa subunit family. As to quaternary structure, NDH-1 is composed of 14 different subunits. Subunits NuoB, C, D, E, F, and G constitute the peripheral sector of the complex.

The protein localises to the cell inner membrane. The enzyme catalyses a quinone + NADH + 5 H(+)(in) = a quinol + NAD(+) + 4 H(+)(out). NDH-1 shuttles electrons from NADH, via FMN and iron-sulfur (Fe-S) centers, to quinones in the respiratory chain. The immediate electron acceptor for the enzyme in this species is believed to be ubiquinone. Couples the redox reaction to proton translocation (for every two electrons transferred, four hydrogen ions are translocated across the cytoplasmic membrane), and thus conserves the redox energy in a proton gradient. This Phenylobacterium zucineum (strain HLK1) protein is NADH-quinone oxidoreductase subunit C.